The chain runs to 732 residues: Catalase-peroxidase (732 aa).

The segment at residues 97–220 (WHSAGTYRTG…LAAVQMGLIY (124 aa)) is a cross-link (tryptophyl-tyrosyl-methioninium (Trp-Tyr) (with M-246)). H98 (proton acceptor) is an active-site residue. A cross-link (tryptophyl-tyrosyl-methioninium (Tyr-Met) (with W-97)) is located at residues 220-246 (YVNPEGPDGKPDPVAAGKDIRETFGRM). H261 is a heme b binding site.

This sequence belongs to the peroxidase family. Peroxidase/catalase subfamily. As to quaternary structure, homodimer or homotetramer. Requires heme b as cofactor. In terms of processing, formation of the three residue Trp-Tyr-Met cross-link is important for the catalase, but not the peroxidase activity of the enzyme.

It carries out the reaction H2O2 + AH2 = A + 2 H2O. The catalysed reaction is 2 H2O2 = O2 + 2 H2O. Functionally, bifunctional enzyme with both catalase and broad-spectrum peroxidase activity. This chain is Catalase-peroxidase, found in Chlorobium phaeobacteroides (strain BS1).